The chain runs to 343 residues: Transcription factor BPE (343 aa).

Positions 142-192 constitute a bHLH domain; it reads QATDSHSLAERARREKISERMKILQDLVPGCNKVIGKALVLDEIINYIQSL.

Homodimer. As to expression, specifically expressed in flowers, mostly in petals, inflorescence and flower buds. In terms of tissue distribution, expressed ubiquitously (leaves, flowers and stems).

Its subcellular location is the nucleus. In terms of biological role, involved in the control of petal size, by interfering with postmitotic cell expansion to limit final petal cell size. The sequence is that of Transcription factor BPE (BPE) from Arabidopsis thaliana (Mouse-ear cress).